The following is a 482-amino-acid chain: E1B 55 kDa protein (482 aa).

Residues 73–94 are disordered; it reads VLDSGEGPSCADDRDKQEKKES. A compositionally biased stretch (basic and acidic residues) spans 83–94; it reads ADDRDKQEKKES. A phosphoserine mark is found at serine 476 and serine 477.

It belongs to the adenoviridae E1B 55 kDa protein family. As to quaternary structure, interacts with host PML-4 and PML-5; this interaction promotes efficient subnuclear targeting of E1B-55K to PML nuclear bodies. Interacts with E4-ORF3 protein. Interacts with E4-ORF6 protein.

Its subcellular location is the host nucleus. The protein resides in the host cytoplasm. Plays a major role to prevent cellular inhibition of viral genome replication. Assembles an SCF-like E3 ubiquitin ligase complex based on the cellular proteins ELOB, ELOC, CUL5 and RBX1, in cooperation with viral E4orf6. This viral RING-type ligase ubiquitinates cellular substrates and targets them to proteasomal degradation: TP53/p53, LIG4, MRE11-RAD50-NBS1 (MRN) complex, ITGA3, DAXX and BLM. E1B-55K probably acts as the substrate-specific adapter of the SCF-like E3 ubiquitin ligase complex. Degradation of host TP53/p53 activity is essential for preventing E1A-induced TP53 accumulation that would otherwise lead to cell apoptosis and growth arrest. E1B-55K also inactivates TP53 transcription-factor activity by binding its transactivation domain. E1B-55K also functions as a SUMO1 E3 ligase for TP53 which causes the latter to be sequestered in promyelocytic leukemia (PML) nuclear bodies thereby contributing to maximal inhibition of TP53 function. The protein is E1B 55 kDa protein of Homo sapiens (Human).